Here is a 362-residue protein sequence, read N- to C-terminus: MERIVVTLGERSYPITIASGLFNEPASFLPLKSGEQVMLVTNETLAPLYLDKVRGVLEQAGVNVDSVILPDGEQYKSLAVLDTVFTALLQKPHGRDTTLVALGGGVVGDLTGFAAASYQRGVRFIQVPTTLLSQVDSSVGGKTAVNHPLGKNMIGAFYQPASVVVDLDCLKTLPPRELASGLAEVIKYGIILDGAFFNWLEENLDALLRLDGPAMAYCIRRCCELKAEVVAADERETGLRALLNLGHTFGHAIEAEMGYGNWLHGEAVAAGMVMAARTSERLGQFSSAETQRIITLLKRAGLPVNGPREMSAQAYLPHMLRDKKVLAGEIRLILPLAIGKSEVRSGVSHELVLNAIADCQSA.

NAD(+)-binding positions include 71-76 (DGEQYK), 105-109 (GVVGD), 129-130 (TT), Lys-142, Lys-151, and 169-172 (CLKT). Positions 184, 247, and 264 each coordinate Zn(2+).

The protein belongs to the sugar phosphate cyclases superfamily. Dehydroquinate synthase family. Requires Co(2+) as cofactor. It depends on Zn(2+) as a cofactor. The cofactor is NAD(+).

It is found in the cytoplasm. It catalyses the reaction 7-phospho-2-dehydro-3-deoxy-D-arabino-heptonate = 3-dehydroquinate + phosphate. Its pathway is metabolic intermediate biosynthesis; chorismate biosynthesis; chorismate from D-erythrose 4-phosphate and phosphoenolpyruvate: step 2/7. Its function is as follows. Catalyzes the conversion of 3-deoxy-D-arabino-heptulosonate 7-phosphate (DAHP) to dehydroquinate (DHQ). This Escherichia coli (strain 55989 / EAEC) protein is 3-dehydroquinate synthase.